A 660-amino-acid polypeptide reads, in one-letter code: UvrABC system protein B (660 aa).

In terms of domain architecture, Helicase ATP-binding spans 24–177; sequence KGFKEGNQFE…DDLARALIDL (154 aa). 37-44 lines the ATP pocket; it reads GVTGSGKT. A Beta-hairpin motif is present at residues 90 to 113; the sequence is YYDYYQPEAYVPQSDTYIAKDSSV. A Helicase C-terminal domain is found at 428–594; sequence QIDDLVSEVN…TIQKSVRDLI (167 aa). One can recognise a UVR domain in the interval 620–655; it reads EKHIADIEKKMKKAAAELNFEAAAEYRDKLIMLKNT.

Belongs to the UvrB family. As to quaternary structure, forms a heterotetramer with UvrA during the search for lesions. Interacts with UvrC in an incision complex.

It localises to the cytoplasm. Functionally, the UvrABC repair system catalyzes the recognition and processing of DNA lesions. A damage recognition complex composed of 2 UvrA and 2 UvrB subunits scans DNA for abnormalities. Upon binding of the UvrA(2)B(2) complex to a putative damaged site, the DNA wraps around one UvrB monomer. DNA wrap is dependent on ATP binding by UvrB and probably causes local melting of the DNA helix, facilitating insertion of UvrB beta-hairpin between the DNA strands. Then UvrB probes one DNA strand for the presence of a lesion. If a lesion is found the UvrA subunits dissociate and the UvrB-DNA preincision complex is formed. This complex is subsequently bound by UvrC and the second UvrB is released. If no lesion is found, the DNA wraps around the other UvrB subunit that will check the other stand for damage. This chain is UvrABC system protein B, found in Agathobacter rectalis (strain ATCC 33656 / DSM 3377 / JCM 17463 / KCTC 5835 / VPI 0990) (Eubacterium rectale).